The following is a 307-amino-acid chain: Ribonuclease Z (307 aa).

Zn(2+) contacts are provided by His-63, His-65, Asp-67, His-68, His-143, Asp-213, and His-271. Residue Asp-67 is the Proton acceptor of the active site.

The protein belongs to the RNase Z family. In terms of assembly, homodimer. Requires Zn(2+) as cofactor.

The enzyme catalyses Endonucleolytic cleavage of RNA, removing extra 3' nucleotides from tRNA precursor, generating 3' termini of tRNAs. A 3'-hydroxy group is left at the tRNA terminus and a 5'-phosphoryl group is left at the trailer molecule.. Zinc phosphodiesterase, which displays some tRNA 3'-processing endonuclease activity. Probably involved in tRNA maturation, by removing a 3'-trailer from precursor tRNA. In Lactococcus lactis subsp. cremoris (strain MG1363), this protein is Ribonuclease Z.